Reading from the N-terminus, the 494-residue chain is Poly(3-hydroxybutyrate) depolymerase (494 aa).

The signal sequence occupies residues 1-25; that stretch reads MAFNFIRAAAAGAAMALCGVGSVHA. The active-site Nucleophile is the Ser-45. Residues Asp-132 and His-166 each act as charge relay system in the active site. A Fibronectin type-III domain is found at 347 to 431; that stretch reads APTGVSTSGA…AAASGTTLAA (85 aa).

It belongs to the AB hydrolase superfamily. Lipase family.

The protein localises to the secreted. It catalyses the reaction [(3R)-hydroxybutanoate](n) + H2O = [(3R)-hydroxybutanoate](n-2) + (3R)-hydroxybutanoate dimer + H(+). The catalysed reaction is [(3R)-hydroxybutanoate](n) + H2O = [(3R)-hydroxybutanoate](n-1) + (R)-3-hydroxybutanoate + H(+). The enzyme catalyses (3R)-hydroxybutanoate dimer + H2O = 2 (R)-3-hydroxybutanoate + H(+). Catalyzes the hydrolysis of poly(3-hydroxybutyrate) (PHB) film, producing the monomer and dimer of 3-hydroxybutyrate (3HB), while the 3HB trimer and tetramer are not formed. This Delftia acidovorans (Pseudomonas acidovorans) protein is Poly(3-hydroxybutyrate) depolymerase.